The chain runs to 1427 residues: MPSDSEEVCLQQSGTGVYENVVYSKETSDRAKRYAGDTNRKTIGRYSAAVQNLIPLRTTERNKNNGGSRIDDAGLFSFVTYSWVFPYLYQAVRGKLDRNQVWGCSFYDSCGLNMARLEVLWEDEKKANAKSPSLFKVIYRFISTRLWFSCAVFFFCLIFGFIGPTCFIRRLIAFAENPERDEQSRIVYSYGIALVAAISVVEFARVLSYGATWAVSYRTGIRVRGAVLALLYKNVLNSKDLCGKTESDVINIFANDGQRLFDAVTFAPLVLVGPLVLVGGIGYLLMVIGRWSLLGILVFFVFDVIQFGLGKSMVACRNLAIVKTEKRISMMAEIIKYIRIVKMNGWEQIFSAKIDQFRKEEKVQIRKSGYAQSLAIACGPVVPVVAAILTFVGVVLAGNDLLASDAFSAITVYFVMLFGIRMIPYGSRYLAEAVVAMRRIQEYLLLEQYAPYPVTNAEDVVLDCQGATYTYQPKAAKAPVDETKEPTENEVIVVETPVFTCSFDKLSIKRGEHIAVIGAVGCGKSAILKAISGHMFTTDDALSVDRSQTVYVPQKAWIFNGTVQDNILFGDKMNSERYYKAVNGCQLTEDLTTLSVGDRTEVGERGATLSGGQKARVALARAVFQTKNLYLFDDIFASLDKKVANKIHEEIIQKLLKKKALMMVTNNMELLHHFDRVLFVEGGNIVADGNHDILYEKNDAYKTFVDACETYQATSGATSPCGDGPAQPAPLDAEILRNSSEDLKGDADKLISDEEDMGNSTIAWRIYKQYIHAAGGWPIWTCLVIGFIVNVVSNIFSTYWLSRWLKKGHDETTTITNGTEFLEMKTSLADSPVTGFYAAVYLVALVVLTISGLFKACVFVKVSLTAATRLHDRMFQAVIHGATSFFDSTPTGRILNRFSKDMDEIDVKLPFTAEVFLQNMITCLGFLVVITSVFPYFLLFAIPLFVVFVVFVSCFRAGIRNLKRSEHISRSPLYDHVSASLEGITTIHTFQQSNRFLEVLKKHLDCNSGAIFMFQSAMRWLAVWLDLLVVVMTAIVALLTVMLTGTVSPADAGMAIAFAVQMSGIFQFAVRTQTELEAKMTSVERVSYYADNIPEDGEWNTRQGLDIESSWPANGQINFSEVNLRYRKSHPLALNDITFEIKGGEKVGIIGRTGSGKSSLANLIFRLYPVTNGTIYIDGVDIRTVGLVKLRRGISAIAQDPSLFSGTVRFNLDPSLEYSDSMIWEALEKCHLKTLVQSLDKKLEADVSHGGNNFSVGERQLFCLARALLMKSRIVILDEATASVDAGTDKLIQEVIKTVFADATVIIIAHRLDNVRNMDRIMHLKNGKLINFTTPQEMFKDDWSVYKLEDKDDDQHSAVVVGENSEHSMEKSSQGSSQESDDIVKVENEQKDSSDDVVHIESGDDDVKADSSEVKETSSDTDIEVVQ.

Topologically, residues 1-147 (MPSDSEEVCL…IYRFISTRLW (147 aa)) are cytoplasmic. Residues 148–168 (FSCAVFFFCLIFGFIGPTCFI) traverse the membrane as a helical segment. The region spanning 151-432 (AVFFFCLIFG…IPYGSRYLAE (282 aa)) is the ABC transmembrane type-1 1 domain. The Extracellular portion of the chain corresponds to 169-185 (RRLIAFAENPERDEQSR). A helical transmembrane segment spans residues 186–206 (IVYSYGIALVAAISVVEFARV). Residues 207–268 (LSYGATWAVS…RLFDAVTFAP (62 aa)) lie on the Cytoplasmic side of the membrane. A helical transmembrane segment spans residues 269 to 289 (LVLVGPLVLVGGIGYLLMVIG). Position 290 (Arg-290) is a topological domain, extracellular. A helical membrane pass occupies residues 291-311 (WSLLGILVFFVFDVIQFGLGK). Topologically, residues 312–375 (SMVACRNLAI…RKSGYAQSLA (64 aa)) are cytoplasmic. Residues 376–396 (IACGPVVPVVAAILTFVGVVL) traverse the membrane as a helical segment. Topologically, residues 397–399 (AGN) are extracellular. A helical transmembrane segment spans residues 400-420 (DLLASDAFSAITVYFVMLFGI). At 421-770 (RMIPYGSRYL…TIAWRIYKQY (350 aa)) the chain is on the cytoplasmic side. The region spanning 486 to 707 (PTENEVIVVE…NDAYKTFVDA (222 aa)) is the ABC transporter 1 domain. Residue 518–525 (GAVGCGKS) participates in ATP binding. A helical transmembrane segment spans residues 771–791 (IHAAGGWPIWTCLVIGFIVNV). The 296-residue stretch at 783 to 1078 (LVIGFIVNVV…AVRTQTELEA (296 aa)) folds into the ABC transmembrane type-1 2 domain. The Extracellular segment spans residues 792-833 (VSNIFSTYWLSRWLKKGHDETTTITNGTEFLEMKTSLADSPV). The N-linked (GlcNAc...) asparagine glycan is linked to Asn-817. The chain crosses the membrane as a helical span at residues 834–854 (TGFYAAVYLVALVVLTISGLF). Topologically, residues 855-909 (KACVFVKVSLTAATRLHDRMFQAVIHGATSFFDSTPTGRILNRFSKDMDEIDVKL) are cytoplasmic. The chain crosses the membrane as a helical span at residues 910-930 (PFTAEVFLQNMITCLGFLVVI). Position 931 (Thr-931) is a topological domain, extracellular. Residues 932-952 (SVFPYFLLFAIPLFVVFVVFV) traverse the membrane as a helical segment. Residues 953–1022 (SCFRAGIRNL…MFQSAMRWLA (70 aa)) lie on the Cytoplasmic side of the membrane. A helical membrane pass occupies residues 1023 to 1043 (VWLDLLVVVMTAIVALLTVML). Over 1044-1049 (TGTVSP) the chain is Extracellular. A helical membrane pass occupies residues 1050–1070 (ADAGMAIAFAVQMSGIFQFAV). Residues 1071-1427 (RTQTELEAKM…SSDTDIEVVQ (357 aa)) lie on the Cytoplasmic side of the membrane. Residues 1117-1351 (INFSEVNLRY…DWSVYKLEDK (235 aa)) enclose the ABC transporter 2 domain. ATP is bound at residue 1151-1158 (GRTGSGKS). The disordered stretch occupies residues 1361–1427 (VGENSEHSME…SSDTDIEVVQ (67 aa)). Basic and acidic residues predominate over residues 1382–1418 (DIVKVENEQKDSSDDVVHIESGDDDVKADSSEVKETS).

Belongs to the ABC transporter superfamily. ABCC family. Conjugate transporter (TC 3.A.1.208) subfamily. Highly expressed in the intestine and pharynx. Expressed at low levels in the hypodermis and in some neurons.

Its subcellular location is the basolateral cell membrane. Heme transporter required for the export of intestinal heme to different tissues and subcellular compartments. Also, required for the export of vitamin B12 from the intestine of the mother to the embryo to support embryonic development. This Caenorhabditis elegans protein is Multidrug resistance-associated protein 5.